We begin with the raw amino-acid sequence, 159 residues long: Ribosomal RNA large subunit methyltransferase H (159 aa).

S-adenosyl-L-methionine is bound by residues Leu76, Gly108, and 127–132 (FGLLTF).

This sequence belongs to the RNA methyltransferase RlmH family. Homodimer.

It localises to the cytoplasm. It carries out the reaction pseudouridine(1915) in 23S rRNA + S-adenosyl-L-methionine = N(3)-methylpseudouridine(1915) in 23S rRNA + S-adenosyl-L-homocysteine + H(+). In terms of biological role, specifically methylates the pseudouridine at position 1915 (m3Psi1915) in 23S rRNA. The polypeptide is Ribosomal RNA large subunit methyltransferase H (Streptococcus thermophilus (strain CNRZ 1066)).